Reading from the N-terminus, the 940-residue chain is Bifunctional uridylyltransferase/uridylyl-removing enzyme (940 aa).

Positions 1–379 (MPRRLRPTRL…PGARPKRKAL (379 aa)) are uridylyltransferase. The segment at 380–736 (DVEGFYEDGG…GQVRPGSNAA (357 aa)) is uridylyl-removing. Residues 496–618 (VDEHTLRAVG…VENPERLRLL (123 aa)) form the HD domain. ACT domains lie at 737–821 (EVVI…PRRG) and 848–929 (VVEA…AARP).

Belongs to the GlnD family. Mg(2+) is required as a cofactor.

It catalyses the reaction [protein-PII]-L-tyrosine + UTP = [protein-PII]-uridylyl-L-tyrosine + diphosphate. The enzyme catalyses [protein-PII]-uridylyl-L-tyrosine + H2O = [protein-PII]-L-tyrosine + UMP + H(+). Uridylyltransferase (UTase) activity is inhibited by glutamine, while glutamine activates uridylyl-removing (UR) activity. Its function is as follows. Modifies, by uridylylation and deuridylylation, the PII regulatory proteins (GlnB and homologs), in response to the nitrogen status of the cell that GlnD senses through the glutamine level. Under low glutamine levels, catalyzes the conversion of the PII proteins and UTP to PII-UMP and PPi, while under higher glutamine levels, GlnD hydrolyzes PII-UMP to PII and UMP (deuridylylation). Thus, controls uridylylation state and activity of the PII proteins, and plays an important role in the regulation of nitrogen assimilation and metabolism. This is Bifunctional uridylyltransferase/uridylyl-removing enzyme from Caulobacter vibrioides (strain ATCC 19089 / CIP 103742 / CB 15) (Caulobacter crescentus).